The following is a 295-amino-acid chain: AP-1-like transcription factor YAP4 (295 aa).

A phosphoserine mark is found at S85, S89, and S196. Residues 181-202 show a composition bias toward polar residues; it reads ASYFPSNSTPATRKNSATTNLP. Residues 181–205 are disordered; that stretch reads ASYFPSNSTPATRKNSATTNLPSEE. Residues 237–295 enclose the bZIP domain; it reads PLRNTKRAAQNRSAQKAFRQRREKYIKNLEEKSKLFDGLMKENSELKKMIESLKSKLKE. The interval 239–260 is basic motif; that stretch reads RNTKRAAQNRSAQKAFRQRREK. Residues 262–271 form a leucine-zipper region; that stretch reads IKNLEEKSKL.

The protein belongs to the bZIP family. YAP subfamily. Homodimer.

The protein localises to the cytoplasm. It localises to the nucleus. Transcription activator involved in the regulation of genes expressed in response to environmental changes and metabolic requirements. According to genome-wide promoter binding and gene expression studies it regulates, among others, genes involved in ribosome biogenesis, and protein synthesis. It may also be involved in pleiotropic drug resistance. When overexpressed it confers increased resistance to cisplatin, the DNA-alkylating agents methylmethanosulfonate, and mitomycin C, the antimalarial drugs quinidine, mefloquine, and chloroquine, and increases cellular tolerance to sodium and lithium. Preferentially binds 5'-TTACTAA-3'. This chain is AP-1-like transcription factor YAP4 (CIN5), found in Saccharomyces cerevisiae (strain ATCC 204508 / S288c) (Baker's yeast).